A 373-amino-acid chain; its full sequence is D-alanine--D-alanine ligase (373 aa).

Residues 156–363 (KKLWSAAGLP…YPTLLATMVE (208 aa)) form the ATP-grasp domain. Position 184–239 (184–239 (LQRLGLPAYVKPARGGSSIGVSRVSSFDELPAAIAAARRHDPKVIVEAAINGRELE)) interacts with ATP. Residues Asp-318, Glu-330, and Asn-332 each coordinate Mg(2+).

It belongs to the D-alanine--D-alanine ligase family. It depends on Mg(2+) as a cofactor. Mn(2+) serves as cofactor.

The protein localises to the cytoplasm. It carries out the reaction 2 D-alanine + ATP = D-alanyl-D-alanine + ADP + phosphate + H(+). It participates in cell wall biogenesis; peptidoglycan biosynthesis. Its function is as follows. Cell wall formation. The polypeptide is D-alanine--D-alanine ligase (Mycobacterium ulcerans (strain Agy99)).